A 33-amino-acid chain; its full sequence is Gastrin (33 aa).

Gln-1 is subject to Pyrrolidone carboxylic acid. Residue Tyr-28 is modified to Sulfotyrosine. Phe-33 bears the Phenylalanine amide mark.

The protein belongs to the gastrin/cholecystokinin family. Sulfation enhances proteolytic processing, and blocks peptide degradation. Levels of sulfation differ between proteolytically-cleaved gastrins and between tissues.

Its subcellular location is the secreted. Gastrin stimulates the stomach mucosa to produce and secrete hydrochloric acid and the pancreas to secrete its digestive enzymes. It also stimulates smooth muscle contraction and increases blood circulation and water secretion in the stomach and intestine. This chain is Gastrin (GAST), found in Macropus giganteus (Eastern gray kangaroo).